We begin with the raw amino-acid sequence, 271 residues long: Formamidopyrimidine-DNA glycosylase (271 aa).

The Schiff-base intermediate with DNA role is filled by P2. The Proton donor role is filled by E3. K58 functions as the Proton donor; for beta-elimination activity in the catalytic mechanism. 3 residues coordinate DNA: H92, R111, and R152. The FPG-type zinc-finger motif lies at 237–271; sequence FVYGRQQQPCKQCGSLLRQTTIRQRTTVWCGHCQG. The active-site Proton donor; for delta-elimination activity is the R261.

This sequence belongs to the FPG family. Monomer. Requires Zn(2+) as cofactor.

It carries out the reaction Hydrolysis of DNA containing ring-opened 7-methylguanine residues, releasing 2,6-diamino-4-hydroxy-5-(N-methyl)formamidopyrimidine.. The enzyme catalyses 2'-deoxyribonucleotide-(2'-deoxyribose 5'-phosphate)-2'-deoxyribonucleotide-DNA = a 3'-end 2'-deoxyribonucleotide-(2,3-dehydro-2,3-deoxyribose 5'-phosphate)-DNA + a 5'-end 5'-phospho-2'-deoxyribonucleoside-DNA + H(+). Its function is as follows. Involved in base excision repair of DNA damaged by oxidation or by mutagenic agents. Acts as a DNA glycosylase that recognizes and removes damaged bases. Has a preference for oxidized purines, such as 7,8-dihydro-8-oxoguanine (8-oxoG). Has AP (apurinic/apyrimidinic) lyase activity and introduces nicks in the DNA strand. Cleaves the DNA backbone by beta-delta elimination to generate a single-strand break at the site of the removed base with both 3'- and 5'-phosphates. The polypeptide is Formamidopyrimidine-DNA glycosylase (mutM1) (Xylella fastidiosa (strain 9a5c)).